A 539-amino-acid polypeptide reads, in one-letter code: Chaperonin GroEL 1 (539 aa).

ATP-binding positions include 29–32, 86–90, Gly413, 478–480, and Asp494; these read TLGP, DGTTT, and NAA. Residues 520 to 539 form a disordered region; sequence IVDKPAEPEDDGHGHHGHAH. Over residues 523-533 the composition is skewed to basic and acidic residues; it reads KPAEPEDDGHG.

The protein belongs to the chaperonin (HSP60) family. Forms a cylinder of 14 subunits composed of two heptameric rings stacked back-to-back. Interacts with the co-chaperonin GroES.

It is found in the cytoplasm. The enzyme catalyses ATP + H2O + a folded polypeptide = ADP + phosphate + an unfolded polypeptide.. Functionally, together with its co-chaperonin GroES, plays an essential role in assisting protein folding. The GroEL-GroES system forms a nano-cage that allows encapsulation of the non-native substrate proteins and provides a physical environment optimized to promote and accelerate protein folding. The sequence is that of Chaperonin GroEL 1 from Mycobacterium ulcerans (strain Agy99).